Reading from the N-terminus, the 351-residue chain is UDP-N-acetylglucosamine--N-acetylmuramyl-(pentapeptide) pyrophosphoryl-undecaprenol N-acetylglucosamine transferase (351 aa).

Residues 13–15 (TGG), Asn125, Arg161, Ser189, Ile241, 260–265 (ALTVCE), and Gln285 each bind UDP-N-acetyl-alpha-D-glucosamine.

The protein belongs to the glycosyltransferase 28 family. MurG subfamily.

It is found in the cell inner membrane. It catalyses the reaction di-trans,octa-cis-undecaprenyl diphospho-N-acetyl-alpha-D-muramoyl-L-alanyl-D-glutamyl-meso-2,6-diaminopimeloyl-D-alanyl-D-alanine + UDP-N-acetyl-alpha-D-glucosamine = di-trans,octa-cis-undecaprenyl diphospho-[N-acetyl-alpha-D-glucosaminyl-(1-&gt;4)]-N-acetyl-alpha-D-muramoyl-L-alanyl-D-glutamyl-meso-2,6-diaminopimeloyl-D-alanyl-D-alanine + UDP + H(+). Its pathway is cell wall biogenesis; peptidoglycan biosynthesis. Its function is as follows. Cell wall formation. Catalyzes the transfer of a GlcNAc subunit on undecaprenyl-pyrophosphoryl-MurNAc-pentapeptide (lipid intermediate I) to form undecaprenyl-pyrophosphoryl-MurNAc-(pentapeptide)GlcNAc (lipid intermediate II). This is UDP-N-acetylglucosamine--N-acetylmuramyl-(pentapeptide) pyrophosphoryl-undecaprenol N-acetylglucosamine transferase from Haemophilus influenzae (strain ATCC 51907 / DSM 11121 / KW20 / Rd).